Reading from the N-terminus, the 358-residue chain is Methylthioribose-1-phosphate isomerase (358 aa).

Substrate is bound by residues 54–56 (RGA), Arg96, and Gln205. Residue Asp246 is the Proton donor of the active site. Residue 256-257 (AK) coordinates substrate.

This sequence belongs to the eIF-2B alpha/beta/delta subunits family. MtnA subfamily.

It carries out the reaction 5-(methylsulfanyl)-alpha-D-ribose 1-phosphate = 5-(methylsulfanyl)-D-ribulose 1-phosphate. It functions in the pathway amino-acid biosynthesis; L-methionine biosynthesis via salvage pathway; L-methionine from S-methyl-5-thio-alpha-D-ribose 1-phosphate: step 1/6. Functionally, catalyzes the interconversion of methylthioribose-1-phosphate (MTR-1-P) into methylthioribulose-1-phosphate (MTRu-1-P). This Pseudomonas entomophila (strain L48) protein is Methylthioribose-1-phosphate isomerase.